The chain runs to 220 residues: VQ motif-containing protein 5 (220 aa).

The VQ signature appears at 49-57 (FKSLVQQLT). 2 disordered regions span residues 61–80 (PCDRLPQNIPKHQDIRPEPI) and 131–171 (HMMA…GASS). Polar residues-rich tracts occupy residues 133 to 150 (MAQSQPQDPTQSMPQSNG) and 157 to 171 (SWFNGSTQEMHGASS).

It localises to the nucleus. May function as negative regulator of plant defense. This chain is VQ motif-containing protein 5, found in Arabidopsis thaliana (Mouse-ear cress).